The following is a 385-amino-acid chain: Chaperone protein DnaJ (385 aa).

Positions 5 to 70 (DYYEVLGVAK…QKRAAYDRYG (66 aa)) constitute a J domain. The segment at 145 to 223 (GFDTEIRVPS…CDGVGRTRRN (79 aa)) adopts a CR-type zinc-finger fold. Residues cysteine 158, cysteine 161, cysteine 175, cysteine 178, cysteine 197, cysteine 200, cysteine 211, and cysteine 214 each contribute to the Zn(2+) site. CXXCXGXG motif repeat units follow at residues 158–165 (CDTCHGSG), 175–182 (CRTCGGSG), 197–204 (CPTCHGTG), and 211–218 (CPSCDGVG).

This sequence belongs to the DnaJ family. As to quaternary structure, homodimer. Zn(2+) is required as a cofactor.

Its subcellular location is the cytoplasm. In terms of biological role, participates actively in the response to hyperosmotic and heat shock by preventing the aggregation of stress-denatured proteins and by disaggregating proteins, also in an autonomous, DnaK-independent fashion. Unfolded proteins bind initially to DnaJ; upon interaction with the DnaJ-bound protein, DnaK hydrolyzes its bound ATP, resulting in the formation of a stable complex. GrpE releases ADP from DnaK; ATP binding to DnaK triggers the release of the substrate protein, thus completing the reaction cycle. Several rounds of ATP-dependent interactions between DnaJ, DnaK and GrpE are required for fully efficient folding. Also involved, together with DnaK and GrpE, in the DNA replication of plasmids through activation of initiation proteins. In Bordetella pertussis (strain Tohama I / ATCC BAA-589 / NCTC 13251), this protein is Chaperone protein DnaJ.